Consider the following 218-residue polypeptide: Antifreeze protein Maxi (218 aa).

The first 23 residues, 1–23, serve as a signal peptide directing secretion; it reads MALSLFTVGQFIFLFWTISITEA.

Belongs to the type-I AFP family. As to quaternary structure, homodimer. As to expression, detected in blood serum (at protein level). Detected in liver.

The protein resides in the secreted. Its function is as follows. Contributes to protect fish blood from freezing at subzero sea water temperatures. Lowers the blood freezing point by about 1.1 degrees at a concentration of 0.1 mg/ml, and by about 1.5 degrees at a concentration of 0.2 mg/ml. Binds to nascent ice crystals and prevents further growth. This is Antifreeze protein Maxi from Pseudopleuronectes americanus (Winter flounder).